The primary structure comprises 218 residues: tRNA (cytidine(56)-2'-O)-methyltransferase (218 aa).

S-adenosyl-L-methionine is bound by residues leucine 81, 106 to 110 (GAEKV), and 124 to 131 (IGNQPHSE). The interval 170 to 218 (KVGEEGPSGGAPGVRAERGRGGRGEGVQGADEVRGHKRGATDRDLGDET) is disordered. Residues 200 to 218 (DEVRGHKRGATDRDLGDET) are compositionally biased toward basic and acidic residues.

The protein belongs to the aTrm56 family. As to quaternary structure, homodimer.

It is found in the cytoplasm. The catalysed reaction is cytidine(56) in tRNA + S-adenosyl-L-methionine = 2'-O-methylcytidine(56) in tRNA + S-adenosyl-L-homocysteine + H(+). Specifically catalyzes the AdoMet-dependent 2'-O-ribose methylation of cytidine at position 56 in tRNAs. The protein is tRNA (cytidine(56)-2'-O)-methyltransferase of Ignicoccus hospitalis (strain KIN4/I / DSM 18386 / JCM 14125).